The primary structure comprises 242 residues: Large ribosomal subunit protein uL1 (242 aa).

Belongs to the universal ribosomal protein uL1 family. As to quaternary structure, part of the 50S ribosomal subunit.

Its function is as follows. Binds directly to 23S rRNA. The L1 stalk is quite mobile in the ribosome, and is involved in E site tRNA release. Functionally, protein L1 is also a translational repressor protein, it controls the translation of the L11 operon by binding to its mRNA. The sequence is that of Large ribosomal subunit protein uL1 from Kitasatospora aureofaciens (Streptomyces aureofaciens).